The sequence spans 34 residues: Photosystem II reaction center protein M (34 aa).

A helical membrane pass occupies residues Ile-5–Ile-25.

This sequence belongs to the PsbM family. PSII is composed of 1 copy each of membrane proteins PsbA, PsbB, PsbC, PsbD, PsbE, PsbF, PsbH, PsbI, PsbJ, PsbK, PsbL, PsbM, PsbT, PsbX, PsbY, PsbZ, Psb30/Ycf12, at least 3 peripheral proteins of the oxygen-evolving complex and a large number of cofactors. It forms dimeric complexes.

The protein localises to the plastid. It is found in the chloroplast thylakoid membrane. Its function is as follows. One of the components of the core complex of photosystem II (PSII). PSII is a light-driven water:plastoquinone oxidoreductase that uses light energy to abstract electrons from H(2)O, generating O(2) and a proton gradient subsequently used for ATP formation. It consists of a core antenna complex that captures photons, and an electron transfer chain that converts photonic excitation into a charge separation. This subunit is found at the monomer-monomer interface. This chain is Photosystem II reaction center protein M, found in Gnetum parvifolium (Small-leaved jointfir).